A 312-amino-acid polypeptide reads, in one-letter code: GDP-L-fucose synthase (312 aa).

NADP(+) is bound at residue 11–17; sequence GGRGMVG. The active-site Proton donor/acceptor is the tyrosine 136. NADP(+) is bound by residues lysine 140 and histidine 179. Positions 187, 202, and 209 each coordinate substrate.

It belongs to the NAD(P)-dependent epimerase/dehydratase family. Fucose synthase subfamily.

The catalysed reaction is GDP-beta-L-fucose + NADP(+) = GDP-4-dehydro-alpha-D-rhamnose + NADPH + H(+). It participates in nucleotide-sugar biosynthesis; GDP-L-fucose biosynthesis via de novo pathway; GDP-L-fucose from GDP-alpha-D-mannose: step 2/2. Functionally, catalyzes the two-step NADP-dependent conversion of GDP-4-dehydro-6-deoxy-D-mannose to GDP-fucose, involving an epimerase and a reductase reaction. The polypeptide is GDP-L-fucose synthase (Azorhizobium caulinodans (strain ATCC 43989 / DSM 5975 / JCM 20966 / LMG 6465 / NBRC 14845 / NCIMB 13405 / ORS 571)).